Reading from the N-terminus, the 462-residue chain is ATP synthase subunit beta (462 aa).

152–159 (GGAGVGKT) is an ATP binding site.

This sequence belongs to the ATPase alpha/beta chains family. F-type ATPases have 2 components, CF(1) - the catalytic core - and CF(0) - the membrane proton channel. CF(1) has five subunits: alpha(3), beta(3), gamma(1), delta(1), epsilon(1). CF(0) has three main subunits: a(1), b(2) and c(9-12). The alpha and beta chains form an alternating ring which encloses part of the gamma chain. CF(1) is attached to CF(0) by a central stalk formed by the gamma and epsilon chains, while a peripheral stalk is formed by the delta and b chains.

Its subcellular location is the cell inner membrane. The catalysed reaction is ATP + H2O + 4 H(+)(in) = ADP + phosphate + 5 H(+)(out). Functionally, produces ATP from ADP in the presence of a proton gradient across the membrane. The catalytic sites are hosted primarily by the beta subunits. The chain is ATP synthase subunit beta from Shewanella amazonensis (strain ATCC BAA-1098 / SB2B).